The following is an 893-amino-acid chain: Translation initiation factor IF-2 (893 aa).

The segment at 49-303 (LNREAGSGPD…KGSSLQQGFQ (255 aa)) is disordered. Over residues 68–82 (STLNIPGTGGKSKSV) the composition is skewed to polar residues. Basic and acidic residues-rich tracts occupy residues 93–159 (VKRD…KDKV) and 166–216 (DMTK…EENK). Basic residues predominate over residues 254–269 (GRGRNAKAARPAKKGN). The span at 270-283 (KHAESKADREEARA) shows a compositional bias: basic and acidic residues. The region spanning 392-561 (PRAPVVTIMG…LLQAEVLELK (170 aa)) is the tr-type G domain. The interval 401-408 (GHVDHGKT) is G1. Position 401 to 408 (401 to 408 (GHVDHGKT)) interacts with GTP. The interval 426 to 430 (GITQH) is G2. The tract at residues 447–450 (DTPG) is G3. Residues 447–451 (DTPGH) and 501–504 (NKID) contribute to the GTP site. Residues 501-504 (NKID) are G4. The segment at 537-539 (SAK) is G5.

It belongs to the TRAFAC class translation factor GTPase superfamily. Classic translation factor GTPase family. IF-2 subfamily.

Its subcellular location is the cytoplasm. One of the essential components for the initiation of protein synthesis. Protects formylmethionyl-tRNA from spontaneous hydrolysis and promotes its binding to the 30S ribosomal subunits. Also involved in the hydrolysis of GTP during the formation of the 70S ribosomal complex. This is Translation initiation factor IF-2 from Salmonella arizonae (strain ATCC BAA-731 / CDC346-86 / RSK2980).